The primary structure comprises 140 residues: Transcription antitermination protein NusB (140 aa).

The protein belongs to the NusB family.

Its function is as follows. Involved in transcription antitermination. Required for transcription of ribosomal RNA (rRNA) genes. Binds specifically to the boxA antiterminator sequence of the ribosomal RNA (rrn) operons. The chain is Transcription antitermination protein NusB from Elusimicrobium minutum (strain Pei191).